Here is a 1026-residue protein sequence, read N- to C-terminus: MDWVALSKSCKTHLLDEGLDVSSIHCFDQYLIVGQCSGQVMVFDVSTDNHFTLIQTFIAHKHSVSSIVCLPFEADGIVDLSIITLDESGLLCQWLLKTCDRRATLQLCDGLCLKLFRLNNNFLAVTGTFLKIYLIRISNFQIVATWTGHEDWPILFPFKDEALLIPVAYSDGSVSLWSVDWSALTFKRNSVTKADVKPTFGKVIDVVPADCISSNYALYVYSDAVVLLESHEKFIASYSLAEITSVFVLADGTACIFTLSSSTLLKLHQSPEPHFELISKYSGDFPWKSCTILKSKPVSLCVYPEKITFNWLTEGTVDSCNLCKLSNTAAVSYAYTDSLNLFLGTTSGLVMFSLFDWYLHNDPAPLYSFTRVSGIVTYMKIFETEHSRSILVVATKTGKAYFYQQLQGERWRFLCERALQSSSITKIIHAKKSLSSGSSGLFIFMSLDGSLCALDESYNLLSYLPSDGAQVETLYSFPDLDQIYVAYDNFQLLNWDVVDQKCSEGNYSDIIDSSFISIGTFDKSNLPTLYHGSCALLTDNLVTVFLDAHDLVLNLNFSNENYIEKTYIDEFLDFIQPPFLNSDIEMEHQLLGTVFDQSSLHLGVGKPDGNAILRFDTEMKSIINTAPNCSALLLYLYFSLMVPLCKYDGLSDTKLTEGILLKLKDLKTVDYSISVLSYVWNNSGKVMQGIIKSMLSRTLELISPEELQRLIYYYFEFFTTTGGEYYLKKEVQHSLYILSLIVSLRPSAFDVSQLKFLSSYLLQKSESMDYDLTAIRLLSNGFSVFSKHIDPAKFIYNLVLSSLENTKDLDDKNSILYRSIVDVSVSNAVLLLTCLCDEVYEQMKSNLRSVILKVVSLAIENTQSEFSLFNQLITEKLLPILYSSRSVEEVHDVTNAIATQFPFACFDSKVEKYSYIDDGDLVVYEIAKRRKVVSKENAECDIQVLSASPSGDYFVGVSATQKECIIWKYSQDFVKFLNLSTPSLTIRKRILLQTNKTNEVEIPEVLWISQSSAEVHIGSTFAIIDL.

WD repeat units follow at residues 14–53 (LLDE…HFTL), 62–104 (HSVS…RRAT), 148–187 (GHED…LTFK), and 937–977 (NAEC…VKFL).

Its subcellular location is the cytoplasm. The protein resides in the nucleus. This is an uncharacterized protein from Schizosaccharomyces pombe (strain 972 / ATCC 24843) (Fission yeast).